A 110-amino-acid chain; its full sequence is Large ribosomal subunit protein uL22 (110 aa).

Belongs to the universal ribosomal protein uL22 family. In terms of assembly, part of the 50S ribosomal subunit.

In terms of biological role, this protein binds specifically to 23S rRNA; its binding is stimulated by other ribosomal proteins, e.g. L4, L17, and L20. It is important during the early stages of 50S assembly. It makes multiple contacts with different domains of the 23S rRNA in the assembled 50S subunit and ribosome. The globular domain of the protein is located near the polypeptide exit tunnel on the outside of the subunit, while an extended beta-hairpin is found that lines the wall of the exit tunnel in the center of the 70S ribosome. The protein is Large ribosomal subunit protein uL22 of Salmonella arizonae (strain ATCC BAA-731 / CDC346-86 / RSK2980).